The following is a 103-amino-acid chain: Large ribosomal subunit protein bL21 (103 aa).

This sequence belongs to the bacterial ribosomal protein bL21 family. In terms of assembly, part of the 50S ribosomal subunit. Contacts protein L20.

In terms of biological role, this protein binds to 23S rRNA in the presence of protein L20. The polypeptide is Large ribosomal subunit protein bL21 (Mycolicibacterium smegmatis (strain ATCC 700084 / mc(2)155) (Mycobacterium smegmatis)).